The primary structure comprises 226 residues: Protein FMP52, mitochondrial (226 aa).

Belongs to the FMP52 family.

The protein localises to the mitochondrion outer membrane. In Debaryomyces hansenii (strain ATCC 36239 / CBS 767 / BCRC 21394 / JCM 1990 / NBRC 0083 / IGC 2968) (Yeast), this protein is Protein FMP52, mitochondrial (FMP52).